A 419-amino-acid polypeptide reads, in one-letter code: tRNA modification GTPase MnmE (419 aa).

3 residues coordinate (6S)-5-formyl-5,6,7,8-tetrahydrofolate: Arg20, Glu76, and Arg115. Residues 211-348 enclose the TrmE-type G domain; that stretch reads GYEVAIIGPP…LLDLVYDRLR (138 aa). Residue Asn221 participates in K(+) binding. Residues 221-226, 240-246, and 265-268 each bind GTP; these read NAGKST, SEIAGTT, and DTAG. Residue Ser225 coordinates Mg(2+). Residues Ser240, Ile242, and Thr245 each contribute to the K(+) site. Thr246 contributes to the Mg(2+) binding site. Lys419 serves as a coordination point for (6S)-5-formyl-5,6,7,8-tetrahydrofolate.

The protein belongs to the TRAFAC class TrmE-Era-EngA-EngB-Septin-like GTPase superfamily. TrmE GTPase family. In terms of assembly, homodimer. Heterotetramer of two MnmE and two MnmG subunits. The cofactor is K(+).

Its subcellular location is the cytoplasm. Exhibits a very high intrinsic GTPase hydrolysis rate. Involved in the addition of a carboxymethylaminomethyl (cmnm) group at the wobble position (U34) of certain tRNAs, forming tRNA-cmnm(5)s(2)U34. The chain is tRNA modification GTPase MnmE from Paracoccus denitrificans (strain Pd 1222).